A 565-amino-acid polypeptide reads, in one-letter code: MAQRIFTLILLLCSTSVFAGLFDAPGRSQFVPVDQAFAFDFQQNQHDLNLTWQIKDGYYLYRKQIRITPEHAKIADVQLPQGVWHEDEFYGKSEIYRDRLTLPVTINQASAGATLTVTYQGCADAGFCYPPETKTVPLSEVVANNAASQPVSVPQQEQPTAQLPFSALWALLIGIGIAFTPCVLPMYPLISGIVLGGKQRLSTARALLLTFIYVQGMALTYTALGLVVAAAGLQFQAALQHPYVLIGLTIVFTLLAMSMFGLLTLQLPSSLQTRLTLMSNRQQGGSPGGVFIMGTIAGLICSPCTTAPLSAILLYIAQSGNMWLGGGTLYLYALGMGLPLMLITVFGNRLLPKSGPWMEQVKTAFGFVILALPVFLLERVIGDVWGLRLWSALGVAFFGWAFITSLQAKRGWMRVVQIILLAAALVSVRPLQDWAFGATHTAQTQTHLNFTQIKTVDELNQALVEAKGKPVMLDLYADWCVACKEFEKYTFSDPQVQKALADTVLLQANVTANDAQDVALLKHLNVLGLPTILFFDGQGQEHPQARVTGFMDAETFSAHLRDRQP.

The N-terminal stretch at 1 to 19 is a signal peptide; the sequence is MAQRIFTLILLLCSTSVFA. At 20–162 the chain is on the periplasmic side; the sequence is GLFDAPGRSQ…VPQQEQPTAQ (143 aa). Disulfide bonds link cysteine 122–cysteine 128 and cysteine 182–cysteine 304. A helical membrane pass occupies residues 163–183; the sequence is LPFSALWALLIGIGIAFTPCV. At 184-207 the chain is on the cytoplasmic side; sequence LPMYPLISGIVLGGKQRLSTARAL. A helical membrane pass occupies residues 208 to 228; that stretch reads LLTFIYVQGMALTYTALGLVV. The Periplasmic segment spans residues 229–242; it reads AAAGLQFQAALQHP. The helical transmembrane segment at 243–263 threads the bilayer; it reads YVLIGLTIVFTLLAMSMFGLL. Over 264–295 the chain is Cytoplasmic; sequence TLQLPSSLQTRLTLMSNRQQGGSPGGVFIMGT. A helical membrane pass occupies residues 296–316; that stretch reads IAGLICSPCTTAPLSAILLYI. Residues 317-322 lie on the Periplasmic side of the membrane; it reads AQSGNM. The chain crosses the membrane as a helical span at residues 323 to 343; it reads WLGGGTLYLYALGMGLPLMLI. Residues 344-356 lie on the Cytoplasmic side of the membrane; sequence TVFGNRLLPKSGP. A helical membrane pass occupies residues 357-377; that stretch reads WMEQVKTAFGFVILALPVFLL. At 378 to 383 the chain is on the periplasmic side; it reads ERVIGD. Residues 384–404 traverse the membrane as a helical segment; the sequence is VWGLRLWSALGVAFFGWAFIT. Residues 405–417 are Cytoplasmic-facing; the sequence is SLQAKRGWMRVVQ. Residues 418–438 traverse the membrane as a helical segment; sequence IILLAAALVSVRPLQDWAFGA. The region spanning 434–565 is the Thioredoxin domain; sequence WAFGATHTAQ…FSAHLRDRQP (132 aa). At 439–565 the chain is on the periplasmic side; it reads THTAQTQTHL…FSAHLRDRQP (127 aa). A disulfide bridge connects residues cysteine 480 and cysteine 483.

The protein belongs to the thioredoxin family. DsbD subfamily.

It is found in the cell inner membrane. The enzyme catalyses [protein]-dithiol + NAD(+) = [protein]-disulfide + NADH + H(+). It carries out the reaction [protein]-dithiol + NADP(+) = [protein]-disulfide + NADPH + H(+). In terms of biological role, required to facilitate the formation of correct disulfide bonds in some periplasmic proteins and for the assembly of the periplasmic c-type cytochromes. Acts by transferring electrons from cytoplasmic thioredoxin to the periplasm. This transfer involves a cascade of disulfide bond formation and reduction steps. The protein is Thiol:disulfide interchange protein DsbD of Escherichia coli O157:H7.